The following is a 411-amino-acid chain: Histidine--tRNA ligase (411 aa).

The protein belongs to the class-II aminoacyl-tRNA synthetase family. As to quaternary structure, homodimer.

It is found in the cytoplasm. The enzyme catalyses tRNA(His) + L-histidine + ATP = L-histidyl-tRNA(His) + AMP + diphosphate + H(+). The sequence is that of Histidine--tRNA ligase from Dictyoglomus turgidum (strain DSM 6724 / Z-1310).